Reading from the N-terminus, the 371-residue chain is L-lysine 4-hydroxylase (371 aa).

Residues His174, Glu176, and His310 each coordinate Fe cation.

The protein belongs to the clavaminate synthase family. Requires Fe(2+) as cofactor.

It catalyses the reaction L-lysine + 2-oxoglutarate + O2 = (4R)-4-hydroxy-L-lysine + succinate + CO2. In terms of biological role, alpha-ketoglutarate-dependent dioxygenase that in vitro catalyzes the regio- and stereoselective hydroxylation of L-lysine, leading to (4R)-4-hydroxy-L-lysine. This is L-lysine 4-hydroxylase from Niastella koreensis (strain DSM 17620 / KACC 11465 / NBRC 106392 / GR20-10).